A 141-amino-acid polypeptide reads, in one-letter code: Large ribosomal subunit protein uL11 (141 aa).

This sequence belongs to the universal ribosomal protein uL11 family. As to quaternary structure, part of the ribosomal stalk of the 50S ribosomal subunit. Interacts with L10 and the large rRNA to form the base of the stalk. L10 forms an elongated spine to which L12 dimers bind in a sequential fashion forming a multimeric L10(L12)X complex. Post-translationally, one or more lysine residues are methylated.

Forms part of the ribosomal stalk which helps the ribosome interact with GTP-bound translation factors. The polypeptide is Large ribosomal subunit protein uL11 (Lactiplantibacillus plantarum (strain ATCC BAA-793 / NCIMB 8826 / WCFS1) (Lactobacillus plantarum)).